The following is a 1356-amino-acid chain: Tenascin-R (1356 aa).

Positions 1–31 (MGIEGETVVLKNMLIGVNLILLGSMLKPSEC) are cleaved as a signal peptide. An N-linked (GlcNAc...) asparagine glycan is attached at Asn55. Positions 127–157 (CASSAQVLQELLSRIEMLEREVSVLRDQCNT) form a coiled coil. O-linked (Xyl...) (chondroitin sulfate) serine glycosylation is present at Ser176. Residues Asn180 and Asn198 are each glycosylated (N-linked (GlcNAc...) asparagine). 3 consecutive EGF-like domains span residues 188 to 199 (CICNEGWFGKNC), 204 to 230 (CPLG…GDDC), and 235 to 261 (CPTD…GEDC). Residue Ser271 is glycosylated (O-linked (Xyl...) (chondroitin sulfate) serine). Asn278 carries an N-linked (GlcNAc...) asparagine glycan. 2 EGF-like domains span residues 281 to 292 (CLCQEGYAGEDC) and 293 to 324 (SQRR…PDCS). Intrachain disulfides connect Cys297-Cys307 and Cys314-Cys323. The O-linked (Xyl...) (chondroitin sulfate) serine glycan is linked to Ser302. Fibronectin type-III domains lie at 328-419 (PPED…TPQG), 420-504 (LQFK…TVID), 505-596 (GPTQ…IDAP), 597-686 (KNLR…TELD), 687-776 (SPRD…FRPI), 777-864 (SHLH…TGID), 865-953 (PPKN…AMDS), 954-1040 (PMDL…TLLD), and 1041-1129 (PPAN…GGRV). 3 N-linked (GlcNAc...) asparagine glycosylation sites follow: Asn391, Asn469, and Asn580. Ser723 is modified (phosphoserine). 6 N-linked (GlcNAc...) asparagine glycosylation sites follow: Asn790, Asn868, Asn873, Asn1034, Asn1044, and Asn1259. In terms of domain architecture, Fibrinogen C-terminal spans 1127 to 1342 (GRVFSHPQDC…FVEMKMRPYI (216 aa)).

The protein belongs to the tenascin family. As to quaternary structure, forms oligomers. Interacts with TNC and FN1. Interacts with BCAN and ACAN in a calcium -dependent manner. Interacts with CNTN1, SCN2B, PTPRZ1, and CSPG3. Post-translationally, contains N-linked oligosaccharides, O-linked sialylated structures. Contains O-linked chondroitin sulfate glycosaminoglycans. Contains N-linked oligosaccharides with a sulfated carbohydrate structure type GalNAc-4-SO4 or HNK-1 (SO4-3-GlcUABeta1,3GalBeta1,4GlcNAc). The levels of HNK-1 rise and fall in parallel to those of TNR during postnatal development of the cerebellum. In contrast, levels of GalNAc-4-SO4 are regulated independently from those of TNR, rising late in cerebellar development and continuing into adulthood. Early in postnatal development, GalNAc-4-SO4 is found predominantly on isoform 1, whereas in the adult it is predominantly on isoform 2. As to expression, brain-specific. Expressed in oligodendrocytes and small subsets of neurons (mainly interneurons and motoneurons) of the cerebellum, hippocampus and olfactory bulb. Expressed in dorsal root ganglia.

It is found in the secreted. It localises to the extracellular space. Its subcellular location is the extracellular matrix. In terms of biological role, neural extracellular matrix (ECM) protein involved in interactions with different cells and matrix components. Theses interactions can influence cellular behavior by either evoking a stable adhesion and differentiation, or repulsion and inhibition of neurite growth. Binding to cell surface gangliosides inhibits RGD-dependent integrin-mediated cell adhesion and results in an inhibition of PTK2/FAK1 (FAK) phosphorylation and cell detachment. Binding to membrane surface sulfatides results in a oligodendrocyte adhesion and differentiation. Interaction with CNTN1 induces a repulsion of neurons and an inhibition of neurite outgrowth. Interacts with SCN2B may play a crucial role in clustering and regulation of activity of sodium channels at nodes of Ranvier. TNR-linked chondroitin sulfate glycosaminoglycans are involved in the interaction with FN1 and mediates inhibition of cell adhesion and neurite outgrowth. The highly regulated addition of sulfated carbohydrate structure may modulate the adhesive properties of TNR over the course of development and during synapse maintenance. The sequence is that of Tenascin-R (Tnr) from Rattus norvegicus (Rat).